The primary structure comprises 368 residues: Cobalt-precorrin-5B C(1)-methyltransferase (368 aa).

Belongs to the CbiD family.

The catalysed reaction is Co-precorrin-5B + S-adenosyl-L-methionine = Co-precorrin-6A + S-adenosyl-L-homocysteine. It functions in the pathway cofactor biosynthesis; adenosylcobalamin biosynthesis; cob(II)yrinate a,c-diamide from sirohydrochlorin (anaerobic route): step 6/10. In terms of biological role, catalyzes the methylation of C-1 in cobalt-precorrin-5B to form cobalt-precorrin-6A. The chain is Cobalt-precorrin-5B C(1)-methyltransferase from Brucella abortus (strain S19).